A 124-amino-acid polypeptide reads, in one-letter code: Photoactive yellow protein (124 aa).

The PAS domain maps to 22-85 (AEYLPFGAVL…GEFLRFHQTG (64 aa)). Residue cysteine 68 is modified to S-(4-hydroxycinnamyl)cysteine.

It belongs to the photoactive yellow protein family. Post-translationally, the 4-hydroxycinnamic acid (p-coumaric acid) chromophore is covalently bound via a thioester linkage.

Its function is as follows. This photoactive protein is a photoreceptor with kinetics similar to that of rhodopsin. The chain is Photoactive yellow protein (pyp) from Cereibacter sphaeroides (strain ATCC 17023 / DSM 158 / JCM 6121 / CCUG 31486 / LMG 2827 / NBRC 12203 / NCIMB 8253 / ATH 2.4.1.) (Rhodobacter sphaeroides).